Consider the following 87-residue polypeptide: Large ribosomal subunit protein uL23c (87 aa).

This sequence belongs to the universal ribosomal protein uL23 family. In terms of assembly, part of the 50S ribosomal subunit.

Its subcellular location is the plastid. The protein localises to the chloroplast. Its function is as follows. Binds to 23S rRNA. The sequence is that of Large ribosomal subunit protein uL23c (rpl23) from Bigelowiella natans (Pedinomonas minutissima).